We begin with the raw amino-acid sequence, 428 residues long: Probable mannosyltransferase YUR1 (428 aa).

Residues 1-3 are Cytoplasmic-facing; the sequence is MAK. Residues 4–24 form a helical; Signal-anchor for type II membrane protein membrane-spanning segment; it reads GGSLYIVGIFLPIWTFMIYIF. Residues 25–88 form a stem region region; that stretch reads GKELFLIRKY…TRQNDSDSFH (64 aa). Residues 25 to 428 lie on the Lumenal side of the membrane; it reads GKELFLIRKY…YFLKEEQDEI (404 aa). 4 N-linked (GlcNAc...) asparagine glycosylation sites follow: Asn77, Asn82, Asn92, and Asn167. Residues 89–428 are catalytic; sequence LRENATILML…YFLKEEQDEI (340 aa). Catalysis depends on Glu313, which acts as the Nucleophile. Asn414 carries N-linked (GlcNAc...) asparagine glycosylation.

The protein belongs to the glycosyltransferase 15 family.

It localises to the golgi apparatus membrane. It functions in the pathway protein modification; protein glycosylation. Its function is as follows. Possible glycosyltransferase involved in N-linked glycosylation. Transfers an alpha-D-mannosyl residue from GDP-mannose into lipid-linked oligosaccharide, forming an alpha-(1-&gt;2)-D-mannosyl-D-mannose linkage. The protein is Probable mannosyltransferase YUR1 (YUR1) of Saccharomyces cerevisiae (strain ATCC 204508 / S288c) (Baker's yeast).